Consider the following 303-residue polypeptide: Rhomboid-related protein 2 (303 aa).

The interval 20-39 (MKEELEEEEKMREDGGGKDR) is disordered. A compositionally biased stretch (basic and acidic residues) spans 28–39 (EKMREDGGGKDR). 7 consecutive transmembrane segments (helical) span residues 72–92 (PVFI…YAVW), 128–148 (LVHA…VLGI), 159–179 (VGLV…IFDP), 183–203 (LVGA…NVLV), 212–232 (FGIF…GFAL), 245–265 (VSFA…YTVF), and 278–298 (FWIA…FNIF). The active-site Nucleophile is S187. H250 is a catalytic residue.

Belongs to the peptidase S54 family. Proteolytic processing of the proenzyme produces a N-terminal fragment (NTF) and a C-terminal fragment (CTF). The processing is required for activation of the protease.

It localises to the cell membrane. The enzyme catalyses Cleaves type-1 transmembrane domains using a catalytic dyad composed of serine and histidine that are contributed by different transmembrane domains.. In terms of biological role, involved in regulated intramembrane proteolysis and the subsequent release of functional polypeptides from their membrane anchors. Known substrate: EFNB3. In Homo sapiens (Human), this protein is Rhomboid-related protein 2 (RHBDL2).